Consider the following 462-residue polypeptide: Elongation factor 1-alpha 1 (462 aa).

N,N,N-trimethylglycine is present on G2. Residues 5 to 242 (KTHINIVVIG…DCILPPTRPT (238 aa)) enclose the tr-type G domain. The segment at 14–21 (GHVDSGKS) is G1. 14 to 21 (GHVDSGKS) is a binding site for GTP. N6,N6,N6-trimethyllysine; alternate is present on K36. The residue at position 36 (K36) is an N6,N6-dimethyllysine; alternate. Residue K36 is modified to N6-methyllysine; alternate. K55 bears the N6,N6-dimethyllysine mark. The G2 stretch occupies residues 70-74 (GITID). K79 bears the N6,N6,N6-trimethyllysine; by EEF1AKMT1 mark. Residues 91-94 (DAPG) are G3. GTP is bound at residue 153–156 (NKMD). Residues 153–156 (NKMD) are G4. Position 165 is an N6,N6,N6-trimethyllysine; alternate; by EEF1AKMT3 (K165). The residue at position 165 (K165) is an N6,N6-dimethyllysine; alternate; by EEF1AKMT3. Position 165 is an N6-acetyllysine; alternate (K165). K165 is modified (N6-methyllysine; alternate; by EEF1AKMT3). K172 is subject to N6-acetyllysine. GTP is bound at residue 194–196 (SGW). A G5 region spans residues 194–196 (SGW). The residue at position 273 (K273) is an N6-acetyllysine. S300 carries the phosphoserine; by TGFBR1 modification. E301 is modified (5-glutamyl glycerylphosphorylethanolamine). At K318 the chain carries N6,N6,N6-trimethyllysine; by EEF1AKMT2. E374 bears the 5-glutamyl glycerylphosphorylethanolamine mark. K385 participates in a covalent cross-link: Glycyl lysine isopeptide (Lys-Gly) (interchain with G-Cter in ubiquitin). N6-acetyllysine; alternate is present on K392. K392 is subject to N6-succinyllysine; alternate. T432 carries the post-translational modification Phosphothreonine; by PASK. N6-acetyllysine is present on K439.

It belongs to the TRAFAC class translation factor GTPase superfamily. Classic translation factor GTPase family. EF-Tu/EF-1A subfamily. As to quaternary structure, found in a nuclear export complex with XPO5, EEF1A1, Ran and aminoacylated tRNA. Interacts with PARP1 and TXK. Interacts with KARS1. May interact with ERGIC2. Interacts with IFIT1 (via TPR repeats 4-7). Interacts with DLC1, facilitating distribution to the membrane periphery and ruffles upon growth factor stimulation. Interacts with ZPR1; the interaction occurs in a epidermal growth factor (EGF)-dependent manner. Interacts with PPP1R16B. Interacts with SPHK1 and SPHK2; both interactions increase SPHK1 and SPHK2 kinase activity. Interacts with guanyl-nucleotide exchange factor EEF1B2. Interacts (via middle-region) with HTATIP2 (via N-terminus); the interaction is direct and competes with EEF1A1 binding to guanyl-nucleotide exchange factor EEF1B2, thereby inhibiting GDP for GTP exchange and reactivation of EEF1A1. Interacts with tRNA. Post-translationally, ISGylated. In terms of processing, phosphorylated by TXK. Phosphorylation by PASK increases translation efficiency. Phosphorylated by ROCK2. Phosphorylation by TGFBR1 inhibits translation elongation. Trimethylated at Lys-79 by EEF1AKMT1. Methylated at Lys-165 by EEF1AKMT3, methylation by EEF1AKMT3 is dynamic as well as inducible by stress conditions, such as ER-stress, and plays a regulatory role on mRNA translation. Trimethylated at Lys-318 by EEF1AKMT2. Mono-, di-, and trimethylated at Lys-36 by EEF1AKMT4; trimethylated form is predominant. Methylation by EEF1AKMT4 contributes to the fine-tuning of translation rates for a subset of tRNAs. Trimethylated at Gly-2 by METTL13. Mono- and dimethylated at Lys-55 by METTL13; dimethylated form is predominant. Post-translationally, ubiquitinated at Lys-385 by RNF14 in response to ribosome collisions (ribosome stalling), leading to its degradation by the proteasome and rescue of stalled ribosomes.

Its subcellular location is the cytoplasm. It localises to the nucleus. It is found in the nucleolus. The protein localises to the cell membrane. It carries out the reaction GTP + H2O = GDP + phosphate + H(+). In terms of biological role, translation elongation factor that catalyzes the GTP-dependent binding of aminoacyl-tRNA (aa-tRNA) to the A-site of ribosomes during the elongation phase of protein synthesis. Base pairing between the mRNA codon and the aa-tRNA anticodon promotes GTP hydrolysis, releasing the aa-tRNA from EEF1A1 and allowing its accommodation into the ribosome. The growing protein chain is subsequently transferred from the P-site peptidyl tRNA to the A-site aa-tRNA, extending it by one amino acid through ribosome-catalyzed peptide bond formation. Also plays a role in the positive regulation of IFNG transcription in T-helper 1 cells as part of an IFNG promoter-binding complex with TXK and PARP1. Also plays a role in cytoskeleton organization by promoting actin bundling. The chain is Elongation factor 1-alpha 1 (EEF1A1) from Equus caballus (Horse).